We begin with the raw amino-acid sequence, 131 residues long: Profilin-5 (131 aa).

A disulfide bridge links C13 with C115. The Involved in PIP2 interaction motif lies at A81–T97. T111 is subject to Phosphothreonine.

The protein belongs to the profilin family. In terms of assembly, occurs in many kinds of cells as a complex with monomeric actin in a 1:1 ratio. In terms of processing, phosphorylated by MAP kinases.

Its subcellular location is the cytoplasm. It is found in the cytoskeleton. In terms of biological role, binds to actin and affects the structure of the cytoskeleton. At high concentrations, profilin prevents the polymerization of actin, whereas it enhances it at low concentrations. The chain is Profilin-5 from Phleum pratense (Common timothy).